The sequence spans 178 residues: MSGGKYVDSEGHLYTVPIREQGNIYKPNNKAMADELSEKQVYDAHTKEIDLVNRDPKHLNDDVVKIDFEDVIAEPEGTHSFDGIWKASFTTFTVTKYWFYRLLSALFGIPMALIWGIYFAILSFLHIWAVVPCIKSFLIEIQCISRVYSIYVHTVCDPLFEAVGKIFSNVRINLQKEI.

Position 2 is an N-acetylserine (Ser-2). Ser-2 carries the post-translational modification Phosphoserine. The required for homooligomerization stretch occupies residues 2–94 (SGGKYVDSEG…WKASFTTFTV (93 aa)). Over 2–104 (SGGKYVDSEG…TKYWFYRLLS (103 aa)) the chain is Cytoplasmic. Residue Lys-5 is modified to N6-acetyllysine; alternate. Lys-5 is covalently cross-linked (Glycyl lysine isopeptide (Lys-Gly) (interchain with G-Cter in ubiquitin); alternate). Position 6 is a phosphotyrosine (Tyr-6). Ser-9 is modified (phosphoserine). Tyr-14 carries the post-translational modification Phosphotyrosine; by ABL1. Tyr-25 is subject to Phosphotyrosine. Residues Lys-26 and Lys-30 each participate in a glycyl lysine isopeptide (Lys-Gly) (interchain with G-Cter in ubiquitin) cross-link. Phosphoserine is present on Ser-37. Glycyl lysine isopeptide (Lys-Gly) (interchain with G-Cter in ubiquitin) cross-links involve residues Lys-39, Lys-47, and Lys-57. Residues 82-94 (DGIWKASFTTFTV) are interaction with CAVIN3. The helical intramembrane region spans 105–125 (ALFGIPMALIWGIYFAILSFL). Residues 126–178 (HIWAVVPCIKSFLIEIQCISRVYSIYVHTVCDPLFEAVGKIFSNVRINLQKEI) are Cytoplasmic-facing. The interacts with SPRY1, SPRY2, SPRY3 and SPRY4 stretch occupies residues 131 to 142 (VPCIKSFLIEIQ). 3 S-palmitoyl cysteine lipidation sites follow: Cys-133, Cys-143, and Cys-156. Positions 149-160 (SIYVHTVCDPLF) are interacts with SPRY1, SPRY2, and SPRY4. The interval 167–178 (FSNVRINLQKEI) is interacts with SPRY1, SPRY2, SPRY3 and SPRY4.

Belongs to the caveolin family. Homooligomer. Interacts (via the N-terminus) with DPP4; the interaction is direct. Forms a stable heterooligomeric complex with CAV2 that targets to lipid rafts and drives caveolae formation. Interacts with PACSIN2; this interaction induces membrane tubulation. Interacts with BMX, BTK, CTNNB1, CDH1, GLIPR2, JUP, NOSTRIN, SNAP25 and STX1A. Interacts with SLC7A9. Interacts with TGFBR1. Interacts with CAVIN3 (via leucine-zipper domain) in a cholesterol-sensitive manner. Interacts with CAVIN1. Interacts with EHD2 in a cholesterol-dependent manner. Forms a ternary complex with UBXN6 and VCP; mediates CAV1 targeting to lysosomes for degradation. Interacts with ABCG1; this interaction regulates ABCG1-mediated cholesterol efflux. Interacts with NEU3; this interaction enhances NEU3 sialidase activity within caveola. Interacts (via C-terminus) with SPRY1, SPRY2 (via C-terminus), SPRY3, and SPRY4. Interacts with IGFBP5; this interaction allows trafficking of IGFBP5 from the plasma membrane to the nucleus. Post-translationally, phosphorylated at Tyr-14 by ABL1 in response to oxidative stress. Ubiquitinated. Undergo monoubiquitination and multi- and/or polyubiquitination. Monoubiquitination of N-terminal lysines promotes integration in a ternary complex with UBXN6 and VCP which promotes oligomeric CAV1 targeting to lysosomes for degradation. Ubiquitinated by ZNRF1; leading to degradation and modulation of the TLR4-mediated immune response.

It is found in the golgi apparatus membrane. It localises to the cell membrane. Its subcellular location is the membrane. The protein localises to the caveola. The protein resides in the membrane raft. Its function is as follows. May act as a scaffolding protein within caveolar membranes. Forms a stable heterooligomeric complex with CAV2 that targets to lipid rafts and drives caveolae formation. Mediates the recruitment of CAVIN proteins (CAVIN1/2/3/4) to the caveolae. Interacts directly with G-protein alpha subunits and can functionally regulate their activity. Involved in the costimulatory signal essential for T-cell receptor (TCR)-mediated T-cell activation. Its binding to DPP4 induces T-cell proliferation and NF-kappa-B activation in a T-cell receptor/CD3-dependent manner. Recruits CTNNB1 to caveolar membranes and may regulate CTNNB1-mediated signaling through the Wnt pathway. Negatively regulates TGFB1-mediated activation of SMAD2/3 by mediating the internalization of TGFBR1 from membrane rafts leading to its subsequent degradation. Binds 20(S)-hydroxycholesterol (20(S)-OHC). This Chlorocebus aethiops (Green monkey) protein is Caveolin-1 (CAV1).